The sequence spans 356 residues: tRNA-specific 2-thiouridylase MnmA 1 (356 aa).

ATP contacts are provided by residues 8-15 (GMSGGVDS) and M34. C103 functions as the Nucleophile in the catalytic mechanism. C103 and C199 are oxidised to a cystine. Position 127 (G127) interacts with ATP. The interval 149–151 (KDQ) is interaction with tRNA. Residue C199 is the Cysteine persulfide intermediate of the active site. Positions 305-306 (RY) are interaction with tRNA.

The protein belongs to the MnmA/TRMU family.

It localises to the cytoplasm. The catalysed reaction is S-sulfanyl-L-cysteinyl-[protein] + uridine(34) in tRNA + AH2 + ATP = 2-thiouridine(34) in tRNA + L-cysteinyl-[protein] + A + AMP + diphosphate + H(+). Functionally, catalyzes the 2-thiolation of uridine at the wobble position (U34) of tRNA, leading to the formation of s(2)U34. This is tRNA-specific 2-thiouridylase MnmA 1 from Clostridium botulinum (strain ATCC 19397 / Type A).